The chain runs to 558 residues: MRSDAIKKGHLKAPNRSLLRACGLKDEDFDKPFIGVANSYIDIIPGHYFLNDYAKIIKDEIRKNGCVPFEFNTIGVDDGIAMGHEGMLYSLPSREIIANSIETVMNAHQLDALICIPNCDKITPGMLMGALRVNVPTIFVSGGPMASGVTKKGEKISLSSVFEAVGAYEAKKISEEEFKDIECSACPSGGSCSGMFTANSMNTLCEAMGIALEGNGTILALSKEREELLRKAARRICEIALDERFKIRNIITQKAVRNAMVVDMAMGGSSNTVLHMLAISREAGVALDIKDLNFISSKVAHIAKIAPSLNSVYMDDIHKAGGVSAVMAEISSRQGHILELDALTITGESLEERLKNAKIKDENIIRKVDNAYSKVGGLAILFGNLAEQGCVIKTAGIIGERKFKGEAVCFNSQDEAIKGIIKGKVKKGNVCVIRYEGPKGGPGMQEMLSPTSLLMGMGLGADVALITDGRFSGATRGLSVGHISPEAAEGGLIGLLKDGDEIEIDVDAYTIHANLSEEEITQRKKEFVLPQKEVPSRWLRMYQKLVSNASKGAVLDME.

Asp78 lines the Mg(2+) pocket. Cys119 contacts [2Fe-2S] cluster. Positions 120 and 121 each coordinate Mg(2+). Residue Lys121 is modified to N6-carboxylysine. Position 192 (Cys192) interacts with [2Fe-2S] cluster. Residue Glu446 participates in Mg(2+) binding. The active-site Proton acceptor is the Ser472.

The protein belongs to the IlvD/Edd family. As to quaternary structure, homodimer. [2Fe-2S] cluster serves as cofactor. The cofactor is Mg(2+).

The enzyme catalyses (2R)-2,3-dihydroxy-3-methylbutanoate = 3-methyl-2-oxobutanoate + H2O. It catalyses the reaction (2R,3R)-2,3-dihydroxy-3-methylpentanoate = (S)-3-methyl-2-oxopentanoate + H2O. It functions in the pathway amino-acid biosynthesis; L-isoleucine biosynthesis; L-isoleucine from 2-oxobutanoate: step 3/4. Its pathway is amino-acid biosynthesis; L-valine biosynthesis; L-valine from pyruvate: step 3/4. In terms of biological role, functions in the biosynthesis of branched-chain amino acids. Catalyzes the dehydration of (2R,3R)-2,3-dihydroxy-3-methylpentanoate (2,3-dihydroxy-3-methylvalerate) into 2-oxo-3-methylpentanoate (2-oxo-3-methylvalerate) and of (2R)-2,3-dihydroxy-3-methylbutanoate (2,3-dihydroxyisovalerate) into 2-oxo-3-methylbutanoate (2-oxoisovalerate), the penultimate precursor to L-isoleucine and L-valine, respectively. This chain is Dihydroxy-acid dehydratase, found in Campylobacter jejuni subsp. jejuni serotype O:23/36 (strain 81-176).